Consider the following 355-residue polypeptide: UDP-N-acetylglucosamine--N-acetylmuramyl-(pentapeptide) pyrophosphoryl-undecaprenol N-acetylglucosamine transferase (355 aa).

UDP-N-acetyl-alpha-D-glucosamine contacts are provided by residues 15 to 17, N127, R163, S191, I244, 263 to 268, and Q288; these read TGG and ALTVSE.

Belongs to the glycosyltransferase 28 family. MurG subfamily.

It localises to the cell inner membrane. It catalyses the reaction di-trans,octa-cis-undecaprenyl diphospho-N-acetyl-alpha-D-muramoyl-L-alanyl-D-glutamyl-meso-2,6-diaminopimeloyl-D-alanyl-D-alanine + UDP-N-acetyl-alpha-D-glucosamine = di-trans,octa-cis-undecaprenyl diphospho-[N-acetyl-alpha-D-glucosaminyl-(1-&gt;4)]-N-acetyl-alpha-D-muramoyl-L-alanyl-D-glutamyl-meso-2,6-diaminopimeloyl-D-alanyl-D-alanine + UDP + H(+). It functions in the pathway cell wall biogenesis; peptidoglycan biosynthesis. Cell wall formation. Catalyzes the transfer of a GlcNAc subunit on undecaprenyl-pyrophosphoryl-MurNAc-pentapeptide (lipid intermediate I) to form undecaprenyl-pyrophosphoryl-MurNAc-(pentapeptide)GlcNAc (lipid intermediate II). The polypeptide is UDP-N-acetylglucosamine--N-acetylmuramyl-(pentapeptide) pyrophosphoryl-undecaprenol N-acetylglucosamine transferase (Salmonella newport (strain SL254)).